A 712-amino-acid chain; its full sequence is Rap1 GTPase-activating protein 2 (712 aa).

The interval 1 to 33 (MLAGLKVKKQELANSSDVTLPDRPLSPPLTAPP) is disordered. S26 is subject to Phosphoserine. T30 is subject to Phosphothreonine. Positions 229 to 445 (IVSYDEHDVN…RTRAALLDNL (217 aa)) constitute a Rap-GAP domain. Phosphoserine occurs at positions 488, 495, 525, 539, 545, 593, and 594. A disordered region spans residues 529 to 712 (AAATAKNQSR…LSHASSSAGH (184 aa)). Polar residues predominate over residues 566–594 (DSASSTPKTPDGGHSSQEIKSETSSNPSS). Residues 599–612 (PNKEKPFIKLKENG) show a composition bias toward basic and acidic residues. Residues 617 to 629 (SRSSSSTSSFSST) show a composition bias toward low complexity. Polar residues predominate over residues 641 to 652 (SGSSQPSTTSPF). The segment covering 660 to 669 (SPSPSSESPS) has biased composition (low complexity). The segment covering 681 to 694 (RSPTDAKSRNSPRS) has biased composition (polar residues).

Its subcellular location is the cytoplasm. GTPase activator for the nuclear Ras-related regulatory protein RAP-1A (KREV-1), converting it to the putatively inactive GDP-bound state. In Mus musculus (Mouse), this protein is Rap1 GTPase-activating protein 2 (Rap1gap2).